Here is a 1065-residue protein sequence, read N- to C-terminus: Exportin-T (1065 aa).

It belongs to the exportin family.

It localises to the nucleus. It is found in the cytoplasm. Functionally, tRNA nucleus export receptor which facilitates tRNA translocation across the nuclear pore complex. Involved in pre-tRNA splicing, probably by affecting the interaction of pre-tRNA with splicing endonuclease. The polypeptide is Exportin-T (LOS1) (Coprinopsis cinerea (strain Okayama-7 / 130 / ATCC MYA-4618 / FGSC 9003) (Inky cap fungus)).